Here is a 380-residue protein sequence, read N- to C-terminus: Chaperone protein DnaJ (380 aa).

The J domain maps to 4 to 68 (DFYSVLGVSR…EKRRMYDQMG (65 aa)). Residues 27 to 87 (KASEYHPDVS…RGATDTDRGR (61 aa)) are compositionally biased toward basic and acidic residues. The tract at residues 27–126 (KASEYHPDVS…SRSGPRQGSD (100 aa)) is disordered. Over residues 88 to 100 (GGMGGMGGGGMGG) the composition is skewed to gly residues. Over residues 115 to 124 (SQSRSGPRQG) the composition is skewed to low complexity. Residues 141 to 223 (GVTKQLTVTR…CRGDGQVRNE (83 aa)) form a CR-type zinc finger. Zn(2+)-binding residues include cysteine 154, cysteine 157, cysteine 171, cysteine 174, cysteine 197, cysteine 200, cysteine 211, and cysteine 214. CXXCXGXG motif repeat units follow at residues 154–161 (CPDCDGAG), 171–178 (CSACDGRG), 197–204 (CPQCDGKG), and 211–218 (CSTCRGDG).

This sequence belongs to the DnaJ family. As to quaternary structure, homodimer. The cofactor is Zn(2+).

It is found in the cytoplasm. Functionally, participates actively in the response to hyperosmotic and heat shock by preventing the aggregation of stress-denatured proteins and by disaggregating proteins, also in an autonomous, DnaK-independent fashion. Unfolded proteins bind initially to DnaJ; upon interaction with the DnaJ-bound protein, DnaK hydrolyzes its bound ATP, resulting in the formation of a stable complex. GrpE releases ADP from DnaK; ATP binding to DnaK triggers the release of the substrate protein, thus completing the reaction cycle. Several rounds of ATP-dependent interactions between DnaJ, DnaK and GrpE are required for fully efficient folding. Also involved, together with DnaK and GrpE, in the DNA replication of plasmids through activation of initiation proteins. This Natronomonas pharaonis (strain ATCC 35678 / DSM 2160 / CIP 103997 / JCM 8858 / NBRC 14720 / NCIMB 2260 / Gabara) (Halobacterium pharaonis) protein is Chaperone protein DnaJ.